A 497-amino-acid chain; its full sequence is Ankyrin repeat domain-containing protein 53 (497 aa).

Residues 1–10 are compositionally biased toward basic residues; sequence MRRPSRRRSK. The segment at 1–65 is disordered; that stretch reads MRRPSRRRSK…VSSPNSESSQ (65 aa). A compositionally biased stretch (low complexity) spans 12–27; that stretch reads STPPRSHTTPRRTGPS. The segment covering 28–39 has biased composition (basic and acidic residues); sequence DSRRRPGTKEQP. ANK repeat units lie at residues 110–140, 144–177, and 181–210; these read KGFT…PVDL, KGQT…AINS, and NGST…NVHA. A coiled-coil region spans residues 239–264; that stretch reads WKHDKKVLAQEMEKLRTLKEKLTILE.

In terms of assembly, interacts with PSRC1; recruited by PSRC1 to the spindle during mitosis. In terms of processing, phosphorylated during mitosis.

It is found in the cytoplasm. Its subcellular location is the cytoskeleton. The protein resides in the spindle. The protein localises to the spindle pole. Required for normal progression through mitosis. Involved in chromosome alignment and cytokinesis via regulation of microtubules polymerization. The chain is Ankyrin repeat domain-containing protein 53 (Ankrd53) from Mus musculus (Mouse).